The following is a 672-amino-acid chain: Acetyl-coenzyme A synthetase (672 aa).

Residues 217–220 and T335 each bind CoA; that span reads RRGK. ATP-binding positions include 411–413, 435–440, D529, R544, and R555; these read GEP and DTWWQT. Positions 566, 568, and 571 each coordinate Mg(2+). Residue R613 participates in CoA binding. K638 bears the N6-acetyllysine mark.

It belongs to the ATP-dependent AMP-binding enzyme family. Mg(2+) serves as cofactor. Post-translationally, acetylated. Deacetylation by the SIR2-homolog deacetylase activates the enzyme. In terms of processing, the N-terminus is blocked.

It catalyses the reaction acetate + ATP + CoA = acetyl-CoA + AMP + diphosphate. Functionally, catalyzes the conversion of acetate into acetyl-CoA (AcCoA), an essential intermediate at the junction of anabolic and catabolic pathways. AcsA undergoes a two-step reaction. In the first half reaction, AcsA combines acetate with ATP to form acetyl-adenylate (AcAMP) intermediate. In the second half reaction, it can then transfer the acetyl group from AcAMP to the sulfhydryl group of CoA, forming the product AcCoA. The sequence is that of Acetyl-coenzyme A synthetase from Methanothrix soehngenii (Methanosaeta concilii).